The primary structure comprises 218 residues: Acetyl- and succinyl-CoA transferase MT0822 (218 aa).

An N-acetyltransferase domain is found at 32–188; the sequence is DTILEGVHDP…EALLFRLTRD (157 aa). Substrate contacts are provided by residues Gln94, 109 to 113, 119 to 124, 145 to 151, and Arg160; these read SGSWL, GHGYGT, and SRSFVDN.

As to quaternary structure, dimer of dimers.

The enzyme catalyses L-lysyl-[protein] + acetyl-CoA = N(6)-acetyl-L-lysyl-[protein] + CoA + H(+). It catalyses the reaction succinyl-CoA + L-lysyl-[protein] = N(6)-succinyl-L-lysyl-[protein] + CoA + H(+). Acetylates and succinylates nucleoid-associated, DNA-binding protein HupB. This chain is Acetyl- and succinyl-CoA transferase MT0822, found in Mycobacterium tuberculosis (strain CDC 1551 / Oshkosh).